The sequence spans 129 residues: Small ribosomal subunit protein uS11 (129 aa).

It belongs to the universal ribosomal protein uS11 family. In terms of assembly, part of the 30S ribosomal subunit. Interacts with proteins S7 and S18. Binds to IF-3.

In terms of biological role, located on the platform of the 30S subunit, it bridges several disparate RNA helices of the 16S rRNA. Forms part of the Shine-Dalgarno cleft in the 70S ribosome. The chain is Small ribosomal subunit protein uS11 from Enterococcus faecalis (strain ATCC 700802 / V583).